We begin with the raw amino-acid sequence, 363 residues long: Des-methyl DIF-1 methyltransferase A (363 aa).

Residues Gly-195, Asp-221, Asp-250, Leu-251, and Lys-266 each contribute to the S-adenosyl-L-methionine site. His-270 acts as the Proton acceptor in catalysis.

The protein belongs to the class I-like SAM-binding methyltransferase superfamily. Cation-independent O-methyltransferase family. COMT subfamily.

It carries out the reaction (3,5-dichloro-2,4,6-trihydroxyphenyl)hexan-1-one + S-adenosyl-L-methionine = 1-(3,5-dichloro-2,6-dihydroxy-4-methoxyphenyl)hexan-1-one + S-adenosyl-L-homocysteine + H(+). Its function is as follows. O-methyltransferase; part of the gene cluster that mediates the biosynthesis of DIF-1 (Differentiation Inducing Factor-1), a signal molecule involved in the differentiation of pstO (prestalk-O) cells. The three-step process begins with the formation of (2,4,6-trihydroxyphenyl)-1-hexan-1-one (THPH) by the polyketide synthase StlB. THPH is then dichlorinated by the flavin-dependent halogenase ChlA. The last step of DIF-1 biosynthesis is the O-methylation of dichloro-THPH (or des-methyl-DIF-1) by the methyltransferase DmtA to yield DIF-1. The polypeptide is Des-methyl DIF-1 methyltransferase A (Dictyostelium discoideum (Social amoeba)).